The sequence spans 376 residues: Fibromodulin (376 aa).

The first 18 residues, 1 to 18 (MQWTSLLLLAGLFSLSQA), serve as a signal peptide directing secretion. At glutamine 19 the chain carries Pyrrolidone carboxylic acid. Sulfotyrosine occurs at positions 20, 38, 39, 45, 47, 53, and 55. In terms of domain architecture, LRRNT spans 67-105 (SPSPPDPRDCPQECDCPPNFPTAMYCDNRNLKYLPFVPS). 8 LRR repeats span residues 106-127 (RMKY…VFDN), 130-151 (GLLW…RKVF), 156-176 (HLER…PLPR), 177-198 (SLRE…ALEG), 201-222 (NLTA…MRGL), 224-245 (SLIL…LPSA), 246-266 (LEQL…YFRG), and 269-289 (KLLY…ASNT). N-linked (GlcNAc...) (keratan sulfate) asparagine glycosylation is present at asparagine 127. An N-linked (GlcNAc...) (keratan sulfate) asparagine glycan is attached at asparagine 166. A glycan (N-linked (GlcNAc...) (keratan sulfate) asparagine) is linked at asparagine 201. The N-linked (GlcNAc...) (keratan sulfate) asparagine glycan is linked to asparagine 291. LRR repeat units lie at residues 294–315 (SLLE…NTNL) and 316–335 (ENLY…SFCT). Cysteine 334 and cysteine 367 are disulfide-bonded. An N-linked (GlcNAc...) asparagine glycan is attached at asparagine 341. Residues 344-365 (KLQVLRLDGNEIKRSAMPADAP) form an LRR 11 repeat.

The protein belongs to the small leucine-rich proteoglycan (SLRP) family. SLRP class II subfamily. In terms of assembly, binds to type I and type II collagen. Post-translationally, binds keratan sulfate chains.

The protein resides in the secreted. The protein localises to the extracellular space. Its subcellular location is the extracellular matrix. Its function is as follows. Affects the rate of fibrils formation. May have a primary role in collagen fibrillogenesis. In Homo sapiens (Human), this protein is Fibromodulin (FMOD).